The sequence spans 313 residues: Ribosomal protein L11 methyltransferase (313 aa).

Residues threonine 164, glycine 185, aspartate 207, and asparagine 249 each coordinate S-adenosyl-L-methionine.

It belongs to the methyltransferase superfamily. PrmA family.

It localises to the cytoplasm. The enzyme catalyses L-lysyl-[protein] + 3 S-adenosyl-L-methionine = N(6),N(6),N(6)-trimethyl-L-lysyl-[protein] + 3 S-adenosyl-L-homocysteine + 3 H(+). Functionally, methylates ribosomal protein L11. The protein is Ribosomal protein L11 methyltransferase of Clostridium perfringens (strain ATCC 13124 / DSM 756 / JCM 1290 / NCIMB 6125 / NCTC 8237 / Type A).